Here is a 518-residue protein sequence, read N- to C-terminus: Major facilitator superfamily domain-containing protein 8 (518 aa).

The tract at residues 1 to 20 (MAGLRNESEQEPLLGDTPGS) is disordered. The Cytoplasmic segment spans residues 1-40 (MAGLRNESEQEPLLGDTPGSREWDILETEEHYKSRWRSIR). The short motif at 13–14 (LL) is the Dileucine internalization motif element. A helical transmembrane segment spans residues 41 to 61 (ILYLTMFLSSVGFSVVMMSIW). At 62–74 (PYLQKIDPTADTS) the chain is on the extracellular side. A helical membrane pass occupies residues 75-95 (FLGWVIASYSLGQMVASPIFG). Topologically, residues 96–105 (LWSNYRPRKE) are cytoplasmic. The chain crosses the membrane as a helical span at residues 106–126 (PLIVSILISVAANCLYAYLHI). Residues 127–131 (PASHN) are Extracellular-facing. A helical membrane pass occupies residues 132–152 (KYYMLVARGLLGIGAGNVAVV). Residues 153 to 173 (RSYTAGATSLQERTSSMANIS) are Cytoplasmic-facing. Residues 174 to 194 (MCQALGFILGPVFQTCFTFLG) traverse the membrane as a helical segment. Residues 195-211 (EKGVTWDVIKLQINMYT) lie on the Extracellular side of the membrane. The helical transmembrane segment at 212–232 (TPVLLSAFLGILNIILILAIL) threads the bilayer. Topologically, residues 233 to 266 (REHRVDDSGRQCKSINFEEASTDEAQVPQGNIDQ) are cytoplasmic. A helical transmembrane segment spans residues 267–287 (VAVVAINVLFFVTLFIFALFE). At 288 to 304 (TIITPLTMDMYAWTQEQ) the chain is on the extracellular side. A helical transmembrane segment spans residues 305–325 (AVLYNGIILAALGVEAVVIFL). The Cytoplasmic segment spans residues 326–337 (GVKLLSKKIGER). A helical transmembrane segment spans residues 338–358 (AILLGGLIVVWVGFFILLPWG). Over 359 to 412 (NQFPKIQWEDLHNNSIPNTTFGEIIIGLWKSPMEDDNERPTGCSIEQAWCLYTP) the chain is Extracellular. 2 N-linked (GlcNAc...) asparagine glycosylation sites follow: N371 and N376. A helical transmembrane segment spans residues 413–433 (VIHLAQFLTSAVLIGLGYPVC). Residues 434 to 451 (NLMSYTLYSKILGPKPQG) lie on the Cytoplasmic side of the membrane. Residues 452 to 472 (VYMGWLTASGSGARILGPMFI) form a helical membrane-spanning segment. Topologically, residues 473-482 (SQVYAHWGPR) are extracellular. Residues 483–503 (WAFSLVCGIIVLTITLLGVVY) traverse the membrane as a helical segment. Over 504–518 (KRLIALSVRYGRIQE) the chain is Cytoplasmic.

Belongs to the major facilitator superfamily. Expressed at very low levels in all tissues tested.

It is found in the endosome membrane. The protein resides in the lysosome membrane. The enzyme catalyses chloride(in) = chloride(out). It catalyses the reaction iodide(out) = iodide(in). The catalysed reaction is fluoride(in) = fluoride(out). Its activity is regulated as follows. Inhibited by chloride channel blockers 4,4'-diisothiocyano-2,2'-stilbenedisulfonate (DIDS), niflumic acid (NFA), and 5-Nitro-2-(3-phenylpropylamino) benzoic acid (NPPB). Outward-rectifying chloride channel involved in endolysosomal chloride homeostasis, membrane fusion and function. Conducts chloride currents up to hundreds of picoamperes. Regulates lysosomal calcium content by reducing the lysosomal membrane potential, thereby activating TRPML1 channel and further release of lysosomal calcium ions. Regulates the pH in endolysosomal compartments and may contribute to progressive acidification from endosome to lysosome. Permeable to other halides such as iodide and fluoride ions. In Homo sapiens (Human), this protein is Major facilitator superfamily domain-containing protein 8.